We begin with the raw amino-acid sequence, 579 residues long: PCNA-interacting partner (579 aa).

The disordered stretch occupies residues 480-543 (TSFGNVHLDR…AKIPKKSNDS (64 aa)). Residues 486 to 496 (HLDRSKNEKVS) are compositionally biased toward basic and acidic residues.

Belongs to the PARI family. As to quaternary structure, interacts with RAD51 and PCNA. Interacts with PARP1. Interacts with TASOR. As to expression, restricted to testis. Overexpressed in multiple cancer cells.

Its subcellular location is the cytoplasm. The protein localises to the nucleus. In terms of biological role, required to suppress inappropriate homologous recombination, thereby playing a central role DNA repair and in the maintenance of genomic stability. Antagonizes homologous recombination by interfering with the formation of the RAD51-DNA homologous recombination structure. Binds single-strand DNA and poly(A) homopolymers. Positively regulate the poly(ADP-ribosyl)ation activity of PARP1; however such function may be indirect. The polypeptide is PCNA-interacting partner (PARPBP) (Homo sapiens (Human)).